Consider the following 103-residue polypeptide: Host transcription reprogramming factor 6 (103 aa).

A signal peptide spans 1 to 19 (MRATTAFQVIAFLAVGAAA). The segment at 66–92 (YWCPNQVCAKTFATQEERDHHIANTVH) adopts a C2H2-type zinc-finger fold. The segment at 82 to 103 (ERDHHIANTVHPTNSKRDVLLQ) is disordered.

It is found in the secreted. Its subcellular location is the host nucleus. In terms of biological role, probable secreted effector that translocates into the nuclei of host cells to reprogram the expression of targeted genes by binding on effector binding elements in rice. The polypeptide is Host transcription reprogramming factor 6 (Pyricularia oryzae (strain 70-15 / ATCC MYA-4617 / FGSC 8958) (Rice blast fungus)).